We begin with the raw amino-acid sequence, 326 residues long: Phenylalanine--tRNA ligase alpha subunit (326 aa).

Position 251 (Glu251) interacts with Mg(2+).

Belongs to the class-II aminoacyl-tRNA synthetase family. Phe-tRNA synthetase alpha subunit type 1 subfamily. Tetramer of two alpha and two beta subunits. Mg(2+) is required as a cofactor.

The protein localises to the cytoplasm. It carries out the reaction tRNA(Phe) + L-phenylalanine + ATP = L-phenylalanyl-tRNA(Phe) + AMP + diphosphate + H(+). In Idiomarina loihiensis (strain ATCC BAA-735 / DSM 15497 / L2-TR), this protein is Phenylalanine--tRNA ligase alpha subunit.